Here is a 370-residue protein sequence, read N- to C-terminus: uncharacterized protein (370 aa).

6 residues coordinate a divalent metal cation: Asp-152, His-154, Asp-184, Asn-215, His-306, and His-308.

This sequence belongs to the metallophosphoesterase superfamily. The cofactor is a divalent metal cation.

This is an uncharacterized protein from Helicobacter pylori (strain J99 / ATCC 700824) (Campylobacter pylori J99).